Here is a 1252-residue protein sequence, read N- to C-terminus: ABC transporter B family member 19 (1252 aa).

Residue Asn5 is glycosylated (N-linked (GlcNAc...) asparagine). An ABC transmembrane type-1 1 domain is found at Met41–Lys330. Helical transmembrane passes span Phe42 to Phe62 and Leu88 to Trp108. Residue Asp136 coordinates ATP. A run of 4 helical transmembrane segments spans residues Val163–Ser183, Leu187–Tyr207, Cys274–Ile294, and Ile308–Phe328. Residues Tyr276 and Trp283 each coordinate brassinolide. One can recognise an ABC transporter 1 domain in the interval Ile365 to Phe601. Tyr374, Ser376, Gly405, Lys406, Ser407, Thr408, and Glu529 together coordinate ATP. N-linked (GlcNAc...) asparagine glycosylation occurs at Asn641. Residues Ser687 to Arg975 enclose the ABC transmembrane type-1 2 domain. 2 helical membrane passes run Ile688–Met708 and Phe732–Phe752. N-linked (GlcNAc...) asparagine glycosylation occurs at Asn758. Asp780 provides a ligand contact to ATP. 2 N-linked (GlcNAc...) asparagine glycosylation sites follow: Asn785 and Asn814. Transmembrane regions (helical) follow at residues Phe822–Leu842, Gly914–Tyr934, and Val949–Leu969. The interaction with FKBP42/TWD1 stretch occupies residues Glu965–Ile1252. An ABC transporter 2 domain is found at Ile1010–Gln1246. ATP contacts are provided by Tyr1019, Ser1021, Arg1022, Lys1051, Ser1052, and Ser1053.

The protein belongs to the ABC transporter superfamily. ABCB family. Multidrug resistance exporter (TC 3.A.1.201) subfamily. As to quaternary structure, interacts with 1-naphthylphthalamic acid (NPA), and FKBP42/TWD1. Post-translationally, phosphorylated by PHOT1 in phototropic seedlings, to modulates auxin export and distribution and regulates leaf and petiole curling. Ubiquitous, mostly in shoot meristems. Present in the majority of stem cells, predominantly in a non-polar manner. Accumulates in seedlings roots and hypocotyls, and in roots apices and inflorescences.

It localises to the cell membrane. It carries out the reaction (indol-3-yl)acetate(in) + ATP + H2O = (indol-3-yl)acetate(out) + ADP + phosphate + H(+). The enzyme catalyses brassinolide(in) + ATP + H2O = brassinolide(out) + ADP + phosphate + H(+). The catalysed reaction is 24-epi-brassinolide(in) + ATP + H2O = 24-epi-brassinolide(out) + ADP + phosphate + H(+). It catalyses the reaction 24-epi-castasterone(in) + ATP + H2O = 24-epi-castasterone(out) + ADP + phosphate + H(+). It carries out the reaction castasterone(in) + ATP + H2O = castasterone(out) + ADP + phosphate + H(+). Its activity is regulated as follows. Transport capacity is stimulated by the chaperone protein FKBP42/TWD1. ATPase activity is specifically activated by bioactive brassinosteroids in a dose-dependent manner, including brassinolide (BL), 24-epiBL and 24-epicastasterone (24-epiCS). Inhibited by vanadate. Brassinosteroid exporter that, in conjunction with ABCB1, supports the accumulation of exogenous brassinosteroids (BR) in the apoplast, thus promoting BR signaling initiation involving the specific receptor BRI1 and required for plant growth and stress responses. Mediates the transport of castasterone (CSA) and brassinolide (BL) across the plasma membrane. Auxin efflux transporter that acts as a negative regulator of light signaling to promote hypocotyl elongation by mediating leaf tip to petiole auxin flux. Required for the regulation of leaf position and morphology during PHOT1-mediated blue light responses involving auxin distribution, especially in low light fluence. Together with ABCB1 and in a FKBP42/TWD1-dependent manner, supports seed development by promoting stamen elongation and, to a lesser extent, anther dehiscence and pollen maturation, probably as auxin transporters. Contributes to the connective auxin transport (CAT) that ensures communication across the shoot system, including auxin loading at axillary bud apices to influence strigolactone-mediated bud outgrowth responses and shoot branching control. Mediates the accumulation of chlorophyll and anthocyanin, as well as the expression of genes in response to light. Participates in auxin efflux and thus regulates the polar auxin basipetal transport (from auxin-producing leaves to auxin-sensitive tissues, and from root tips to root elongating zone). Involved in diverse auxin-mediated responses including gravitropism, phototropism and lateral root formation. Required for the regulation of organ bending, such as gravitropic root bending. The chain is ABC transporter B family member 19 from Arabidopsis thaliana (Mouse-ear cress).